The sequence spans 366 residues: 3-dehydroquinate synthase (366 aa).

Residues glycine 107–aspartate 111, threonine 131–serine 132, lysine 144, and lysine 153 each bind NAD(+). Zn(2+)-binding residues include glutamate 186, histidine 251, and histidine 268.

This sequence belongs to the sugar phosphate cyclases superfamily. Dehydroquinate synthase family. Requires Co(2+) as cofactor. Zn(2+) is required as a cofactor. It depends on NAD(+) as a cofactor.

Its subcellular location is the cytoplasm. It carries out the reaction 7-phospho-2-dehydro-3-deoxy-D-arabino-heptonate = 3-dehydroquinate + phosphate. It functions in the pathway metabolic intermediate biosynthesis; chorismate biosynthesis; chorismate from D-erythrose 4-phosphate and phosphoenolpyruvate: step 2/7. In terms of biological role, catalyzes the conversion of 3-deoxy-D-arabino-heptulosonate 7-phosphate (DAHP) to dehydroquinate (DHQ). The chain is 3-dehydroquinate synthase from Rippkaea orientalis (strain PCC 8801 / RF-1) (Cyanothece sp. (strain PCC 8801)).